Consider the following 91-residue polypeptide: Small ribosomal subunit protein uS19 (91 aa).

This sequence belongs to the universal ribosomal protein uS19 family.

Its function is as follows. Protein S19 forms a complex with S13 that binds strongly to the 16S ribosomal RNA. In Methylibium petroleiphilum (strain ATCC BAA-1232 / LMG 22953 / PM1), this protein is Small ribosomal subunit protein uS19.